The following is a 442-amino-acid chain: MALFLSKRLLRFTVIAGAVIVLLLTLNSNSRTQQYIPSSISAAFDFTSGSISPEQQVISEENDAKKLEQSALNSEASEDSEAMDEESKALKAAAEKADAPIDTKTTMDYITPSFANKAGKPKACYVTLVRNKELKGLLSSIKYVENKINKKFPYPWVFLNDEPFTEEFKEAVTKAVSSEVKFGILPKEHWSYPEWINQTKAAEIRADAATKYIYGGSESYRHMCRYQSGFFWRHELLEEYDWYWRVEPDIKLYCDINYDVFKWMQENEKVYGFTVSIHEYEVTIPTLWQTSMDFIKKNPEYLDENNLMSFLSNDNGKTYNLCHFWSNFEIANLNLWRSPAYREYFDTLDHQGGFFYERWGDAPVHSIAAALFLPKDKIHYFSDIGYHHPPYDNCPLDKEVYNSNNCECDQGNDFTFQGYSCGKEYYDAQGLVKPKNWKKFRE.

The Cytoplasmic segment spans residues 1–11 (MALFLSKRLLR). A helical; Signal-anchor for type II membrane protein membrane pass occupies residues 12–30 (FTVIAGAVIVLLLTLNSNS). Residues 31–118 (RTQQYIPSSI…YITPSFANKA (88 aa)) are stem region. The Lumenal portion of the chain corresponds to 31–442 (RTQQYIPSSI…KPKNWKKFRE (412 aa)). The disordered stretch occupies residues 68-95 (EQSALNSEASEDSEAMDEESKALKAAAE). The span at 85-95 (EESKALKAAAE) shows a compositional bias: basic and acidic residues. The catalytic stretch occupies residues 119 to 442 (GKPKACYVTL…KPKNWKKFRE (324 aa)). N197 carries an N-linked (GlcNAc...) asparagine glycan. Residue E329 is the Nucleophile of the active site.

It belongs to the glycosyltransferase 15 family. Mn(2+) serves as cofactor.

It is found in the golgi apparatus membrane. It functions in the pathway protein modification; protein glycosylation. Functionally, mannosyltransferase that transfers an alpha-D-mannosyl residue from GDP-mannose into lipid-linked oligosaccharide, forming an alpha-(1-&gt;2)-D-mannosyl-D-mannose linkage. Required for the attachment of the third mannose residue of O-linked saccharides. The sequence is that of Glycolipid 2-alpha-mannosyltransferase (KRE2) from Saccharomyces cerevisiae (strain ATCC 204508 / S288c) (Baker's yeast).